The primary structure comprises 234 residues: Ankyrin repeat-containing protein C6C3.08 (234 aa).

5 ANK repeats span residues 36–66, 70–100, 106–135, 140–169, and 173–203; these read DKRT…KPDE, AGWT…DVDP, GGQT…ELIR, QGQT…PLNT, and YGFT…TLRK.

This is Ankyrin repeat-containing protein C6C3.08 from Schizosaccharomyces pombe (strain 972 / ATCC 24843) (Fission yeast).